The following is a 658-amino-acid chain: Structure-specific endonuclease subunit SLX4 (658 aa).

Disordered regions lie at residues 17–37 (VDSD…IPGD), 74–123 (GATE…KSIT), and 327–383 (QPGV…QVLQ). 2 stretches are compositionally biased toward low complexity: residues 75-90 (ATES…PPAK) and 99-108 (KAAGRTSTGT). The segment covering 365–374 (FPKSPTSTPE) has biased composition (polar residues).

It belongs to the SLX4 family. As to quaternary structure, forms a heterodimer with SLX1. In terms of processing, phosphorylated in response to DNA damage.

It localises to the nucleus. Regulatory subunit of the SLX1-SLX4 structure-specific endonuclease that resolves DNA secondary structures generated during DNA repair and recombination. Has endonuclease activity towards branched DNA substrates, introducing single-strand cuts in duplex DNA close to junctions with ss-DNA. The protein is Structure-specific endonuclease subunit SLX4 of Lachancea thermotolerans (strain ATCC 56472 / CBS 6340 / NRRL Y-8284) (Yeast).